The chain runs to 772 residues: Larval serum protein 1 gamma chain (772 aa).

A signal peptide spans 1-16; the sequence is MKLTLVILALVACVTA. An N-linked (GlcNAc...) asparagine glycan is attached at Asn-242.

It belongs to the hemocyanin family. As to quaternary structure, heterohexamer, composed of three subunits, alpha, beta and gamma. As to expression, larval hemolymph.

The protein localises to the secreted. The protein resides in the extracellular space. Larval storage protein (LSP) which may serve as a store of amino acids for synthesis of adult proteins. The protein is Larval serum protein 1 gamma chain (Lsp1gamma) of Drosophila melanogaster (Fruit fly).